The chain runs to 173 residues: Photosystem I assembly protein Ycf3 (173 aa).

3 TPR repeats span residues 35 to 68 (AFVYYRDGMSAQADGEYKEALDNYYEALKLEDDA), 72 to 105 (SYILYNIGIIHGSNGEHERALEYYHEAIELNPNL), and 120 to 153 (GERAKEEGREDESEALFDKAAEYWKQAIRLAPNN).

Belongs to the Ycf3 family.

Its subcellular location is the cellular thylakoid membrane. Functionally, essential for the assembly of the photosystem I (PSI) complex. May act as a chaperone-like factor to guide the assembly of the PSI subunits. In Gloeothece citriformis (strain PCC 7424) (Cyanothece sp. (strain PCC 7424)), this protein is Photosystem I assembly protein Ycf3.